We begin with the raw amino-acid sequence, 107 residues long: MRDMLGLMKQAQAMQEKIQQMQAEIERLEVEGQSGGGMVRVTLSAKGQLRNLAIDDQLIKADEKQILEDLIITAHEDARKKAERLMEEKMQGVTAGLALPPGMKLPF.

This sequence belongs to the YbaB/EbfC family. Homodimer.

The protein localises to the cytoplasm. Its subcellular location is the nucleoid. Binds to DNA and alters its conformation. May be involved in regulation of gene expression, nucleoid organization and DNA protection. This Methylocella silvestris (strain DSM 15510 / CIP 108128 / LMG 27833 / NCIMB 13906 / BL2) protein is Nucleoid-associated protein Msil_0275.